Here is a 544-residue protein sequence, read N- to C-terminus: MGEDDIVELLWNGQVVRTSQPQRPSSGKPSPTPPILRGSGSGSGEENAPLPLPLLQPPRPLHHQNLFIREEEMSSWLHYSYTGVTSTPATHPQSSVSLPPPPPIAPSEDDVVELLWKSGQVVQSIQTQRPIPPPIFRGSGSGGGEETVLPLPPLHPSHQNIFIQEDEMASWLYHPLRQDYFSSGVASTSATRPQSSASLAPTPPPPSVPYGQIPVERRTENFMNFLRLRGNIFSGGRVEAGPVVIESTQIGSSATPSSSAAESCVIPATHGTESRAAAITGVSRTFAVPGLGRRGKEVATETAGTSYSGVNKAETERVQIQPERETKITEDKKREETIAEIQGTEEAHGSTSRKRSRAADMHNLSERRRRERINERMKTLQELLPRCRKTDKVSMLEDVIEYVKSLQLQIQMMSMGHGMMPPMMHEGNTQQFMPHMAMGMKGMNRPPPFVPFPGKTFPRPGHMAGVGPSYPALRYPFPDTQASDLSRVHVPSLHSNPVPNQPRFPAYINPYSQFVGLHQMQQPPLPLQGQPTSQPSFSHASTSK.

Disordered stretches follow at residues 12–59 (NGQV…QPPR) and 185–208 (VAST…PPSV). Residues 15–29 (VVRTSQPQRPSSGKP) show a composition bias toward polar residues. Residues 50–59 (LPLPLLQPPR) show a composition bias toward pro residues. The residue at position 269 (T269) is a Phosphothreonine. S274 bears the Phosphoserine mark. Disordered stretches follow at residues 342–364 (QGTE…MHNL) and 522–544 (QPPL…STSK). One can recognise a bHLH domain in the interval 357–406 (RAADMHNLSERRRRERINERMKTLQELLPRCRKTDKVSMLEDVIEYVKSL). Residues 522-535 (QPPLPLQGQPTSQP) are compositionally biased toward low complexity. 2 positions are modified to phosphoserine: S541 and S543.

In terms of assembly, homodimer.

It is found in the nucleus. This chain is Transcription factor bHLH119 (BHLH119), found in Arabidopsis thaliana (Mouse-ear cress).